A 1196-amino-acid chain; its full sequence is Protein BRASSINOSTEROID INSENSITIVE 1 (1196 aa).

Residues 1–23 (MKTFSSFFLSVTTLFFFSFFSLS) form the signal peptide. A Cys pair 1 motif is present at residues 62-69 (CTFDGVTC). LRR repeat units follow at residues 71–98 (DDKV…LLSL), 99–121 (TGLE…FKCS), 122–146 (ASLT…SLGS), 148–169 (SGLK…VSGG), 172–197 (LNSL…VLSD), 199–221 (CGEL…VSRC), 222–244 (VNLE…LGDC), 245–268 (SALQ…ISTC), 269–290 (TELK…PLPL), 291–314 (KSLQ…LSGA), 316–338 (DTLT…FFGS), 339–363 (CSLL…TLLK), 364–388 (MRGL…LTNL), 390–413 (ASLL…LCQN), 415–439 (KNTL…LSNC), 441–463 (ELVS…LGSL), 464–487 (SKLR…LMYV), 488–511 (KTLE…LSNC), 513–535 (NLNW…IGRL), 536–559 (ENLA…LGDC), and 561–583 (SLIW…MFKQ). The N-linked (GlcNAc...) asparagine glycan is linked to N112. N154 carries an N-linked (GlcNAc...) asparagine glycan. N233 is a glycosylation site (N-linked (GlcNAc...) asparagine). Residue N275 is glycosylated (N-linked (GlcNAc...) asparagine). N-linked (GlcNAc...) asparagine glycosylation is found at N351, N387, N401, and N438. N510 carries an N-linked (GlcNAc...) asparagine glycan. Residues N545 and N573 are each glycosylated (N-linked (GlcNAc...) asparagine). Y597 is a binding site for brassinolide. N-linked (GlcNAc...) asparagine glycosylation occurs at N636. The segment at 640–642 (RVY) is SERK1 binding. Brassinolide contacts are provided by Y642 and S647. The N-linked (GlcNAc...) asparagine glycan is linked to N653. 4 LRR repeats span residues 653 to 677 (NGSM…IGSM), 678 to 701 (PYLF…VGDL), 702 to 725 (RGLN…MSAL), and 727 to 750 (MLTE…QFET). N705 provides a ligand contact to brassinolide. The tract at residues 726-729 (TMLT) is SERK1 binding. The N-linked (GlcNAc...) asparagine glycan is linked to N737. The segment at 746-750 (GQFET) is SERK1 binding. A Cys pair 2 motif is present at residues 763–770 (CGYPLPRC). Residues 793-813 (AGSVAMGLLFSFVCIFGLILV) form a helical membrane-spanning segment. A Phosphotyrosine modification is found at Y831. S838 bears the Phosphoserine mark. T842, T846, and T851 each carry phosphothreonine. S858 is modified (phosphoserine). Phosphothreonine occurs at positions 872 and 880. The Protein kinase domain occupies 883 to 1158 (FHNDSLIGSG…VQVMAMFKEI (276 aa)). Phosphoserine is present on residues S887 and S891. ATP is bound by residues 889 to 897 (IGSGGFGDV) and K911. Y956 is subject to Phosphotyrosine. Residues 957–959 (EFM) and 963–966 (SLED) contribute to the ATP site. At S981 the chain carries Phosphoserine. The residue at position 982 (T982) is a Phosphothreonine. D1009 (proton acceptor) is an active-site residue. Residues 1009–1014 (DMKSSN) and D1027 contribute to the ATP site. The residue at position 1035 (S1035) is a Phosphoserine. At T1039 the chain carries Phosphothreonine. Phosphoserine is present on residues S1042 and S1044. T1045 and T1049 each carry phosphothreonine. Y1052 is modified (phosphotyrosine). A Phosphoserine modification is found at S1060. The residue at position 1072 (Y1072) is a Phosphotyrosine. Phosphoserine is present on residues S1166 and S1168. At T1169 the chain carries Phosphothreonine. Residues S1172 and S1179 each carry the phosphoserine modification. Residue T1180 is modified to Phosphothreonine. Position 1187 is a phosphoserine (S1187).

The protein belongs to the protein kinase superfamily. Ser/Thr protein kinase family. As to quaternary structure, monomer or homodimer in the plasma membrane. Heterodimer with BAK1 in the endosomes. Interacts with SERK1 and TTL in a kinase-dependent manner. Bind to SERK1 in a brassinolide-dependent manner. Component of the SERK1 signaling complex, composed of KAPP, CDC48A, GRF6 or GRF7, SERK1, SERK2, SERK3/BAK1 and BRI1. Interacts with CDG1. No interactions with PSKR1 or CNGC17. Interacts with BIK1. Interacts with B'ALPHA, B'BETA, B'GAMMA and B'ETA. Interacts with BSK1 and BSK3. Interacts with BSK5, BSK6 and BSK11. Post-translationally, autophosphorylated on Tyr-831, Tyr-956 and maybe Tyr-1072. Phosphorylated on at least 12 sites, with a preference for Ser residues. Transphosphorylated on Ser-887 by SERK1 and on Ser-838, Thr-846, Ser-858 and Ser-1166 by BAK1. Phosphorylation on Ser-1166 enhances the kinase activity. In terms of processing, glycosylated. Expressed ubiquitously.

It is found in the cell membrane. Its subcellular location is the endosome membrane. The catalysed reaction is L-seryl-[protein] + ATP = O-phospho-L-seryl-[protein] + ADP + H(+). It carries out the reaction L-threonyl-[protein] + ATP = O-phospho-L-threonyl-[protein] + ADP + H(+). It catalyses the reaction L-tyrosyl-[protein] + ATP = O-phospho-L-tyrosyl-[protein] + ADP + H(+). Its activity is regulated as follows. Activated by Ser and Thr phosphorylation. Functionally, receptor with a dual specificity kinase activity acting on both serine/threonine- and tyrosine-containing substrates. Regulates, in response to brassinosteroid binding, a signaling cascade involved in plant development, including expression of light- and stress-regulated genes, promotion of cell elongation, normal leaf and chloroplast senescence, and flowering. Binds brassinolide (BL), and less effectively castasterone (CS), but not 2,3,22,23-O-tetramethylbrassinolide or ecdysone. May be involved in a feedback regulation of brassinosteroid biosynthesis. Phosphorylates BRI1-associated receptor kinase 1 (BAK1), Transthyretin-Like protein (TTL) and SERK1 on 'Ser-299' and 'Thr-462' in vitro. May have a guanylyl cyclase activity. Phosphorylates BSK1, BSK2 and BSK3 in vitro. Phosphorylates BSK1, BSK3, BSK5, BSK6, BSK8 and BSK11 in vitro. This is Protein BRASSINOSTEROID INSENSITIVE 1 from Arabidopsis thaliana (Mouse-ear cress).